The following is a 113-amino-acid chain: Putative pterin-4-alpha-carbinolamine dehydratase (113 aa).

It belongs to the pterin-4-alpha-carbinolamine dehydratase family.

It carries out the reaction (4aS,6R)-4a-hydroxy-L-erythro-5,6,7,8-tetrahydrobiopterin = (6R)-L-erythro-6,7-dihydrobiopterin + H2O. The chain is Putative pterin-4-alpha-carbinolamine dehydratase from Nitrosococcus oceani (strain ATCC 19707 / BCRC 17464 / JCM 30415 / NCIMB 11848 / C-107).